Here is a 571-residue protein sequence, read N- to C-terminus: Urease subunit alpha (571 aa).

The 439-residue stretch at 133 to 571 (GGIDTHVHFI…LPLTQRYFLF (439 aa)) folds into the Urease domain. Residues H138, H140, and K221 each coordinate Ni(2+). K221 is subject to N6-carboxylysine. Residue H223 coordinates substrate. H250 and H276 together coordinate Ni(2+). The Proton donor role is filled by H324. Residue D364 coordinates Ni(2+).

It belongs to the metallo-dependent hydrolases superfamily. Urease alpha subunit family. As to quaternary structure, heterotrimer of UreA (gamma), UreB (beta) and UreC (alpha) subunits. Three heterotrimers associate to form the active enzyme. Ni cation serves as cofactor. Carboxylation allows a single lysine to coordinate two nickel ions.

It localises to the cytoplasm. It carries out the reaction urea + 2 H2O + H(+) = hydrogencarbonate + 2 NH4(+). Its pathway is nitrogen metabolism; urea degradation; CO(2) and NH(3) from urea (urease route): step 1/1. The chain is Urease subunit alpha from Staphylococcus aureus (strain USA300).